Reading from the N-terminus, the 107-residue chain is UPF0145 protein ESA_02470 (107 aa).

The protein belongs to the UPF0145 family.

This is UPF0145 protein ESA_02470 from Cronobacter sakazakii (strain ATCC BAA-894) (Enterobacter sakazakii).